The primary structure comprises 78 residues: Large ribosomal subunit protein bL28 (78 aa).

The tract at residues 1-23 (MSRVCQVTGKRPMVGNNRSHAKN) is disordered.

The protein belongs to the bacterial ribosomal protein bL28 family.

In Shewanella pealeana (strain ATCC 700345 / ANG-SQ1), this protein is Large ribosomal subunit protein bL28.